The following is a 178-amino-acid chain: Protein GrpE (178 aa).

The protein belongs to the GrpE family. In terms of assembly, homodimer.

Its subcellular location is the cytoplasm. Participates actively in the response to hyperosmotic and heat shock by preventing the aggregation of stress-denatured proteins, in association with DnaK and GrpE. It is the nucleotide exchange factor for DnaK and may function as a thermosensor. Unfolded proteins bind initially to DnaJ; upon interaction with the DnaJ-bound protein, DnaK hydrolyzes its bound ATP, resulting in the formation of a stable complex. GrpE releases ADP from DnaK; ATP binding to DnaK triggers the release of the substrate protein, thus completing the reaction cycle. Several rounds of ATP-dependent interactions between DnaJ, DnaK and GrpE are required for fully efficient folding. The sequence is that of Protein GrpE from Rickettsia africae (strain ESF-5).